Consider the following 497-residue polypeptide: MDKKKNSFPDNLPEGTISELMQKQNNVQPSVIVIGSGISGLAAARNLSEASFKVTVLESRDRIGGRIHTDYSFGCPVDMGASWLHGVSDENPLAPIIRRLGLTLYRTSGDDSILYDHDLESYGLFDMHGNKIPPQLVTKVGDAFKRILEETEKIRDETANDMSVLQGISIVLDRNPELRQEGMAYEVLQWYLCRMEAWFAVDANLISLKCWDQDECLSGGHGLMVQGYEPVIRTIAKDLDIRLNHRVTKVVRTSNNKVIVAVEGGTNFVADAVIITVPIGVLKANLIQFEPELPQWKTSAISGLGVGNENKIALRFDRAFWPNVEFLGMVAPTSYACGYFLNLHKATGHPVLVYMAAGNLAQDLEKLSDEATANFVMLQLKKMFPDAPDPAQYLVTRWGTDPNTLGCYAYDVVGMPEDLYPRLGEPVDNIFFGGEAVNVEHQGSAHGAFLAGVSASQNCQRYIFERLGAWEKLKLVSLMGNSDILETATVPLQISRM.

FAD is bound by residues glutamate 58, arginine 66, valine 247, and glutamate 435. The Microbody targeting signal signature appears at 495–497 (SRM).

This sequence belongs to the flavin monoamine oxidase family. It depends on FAD as a cofactor. In terms of tissue distribution, highly expressed in roots, flowers and greening cotelydons. Lower expression in other tissues.

It localises to the peroxisome. It catalyses the reaction spermine + O2 + H2O = 3-aminopropanal + spermidine + H2O2. The catalysed reaction is spermidine + O2 + H2O = 3-aminopropanal + putrescine + H2O2. It functions in the pathway amine and polyamine degradation; spermine degradation. Its pathway is amine and polyamine degradation; spermidine degradation. Its function is as follows. Flavoenzyme involved in polyamine back-conversion. Catalyzes the oxidation of the secondary amino group of polyamines, such as spermine and spermidine. Substrate preference is spermine &gt; spermidine. No activity detected when putrescine or N(1)-acetylspermine are used as substrates. Plays an important role in the regulation of polyamine intracellular concentration. The sequence is that of Probable polyamine oxidase 4 (PAO4) from Arabidopsis thaliana (Mouse-ear cress).